The primary structure comprises 582 residues: DnaJ protein ERDJ3A (582 aa).

Positions 1 to 25 are cleaved as a signal peptide; the sequence is MGIPVRSLLVASIVLSSIALHVAAA. In terms of domain architecture, J spans 29-93; sequence DPYKVLGVDK…EKRKNYDLYG (65 aa). N-linked (GlcNAc...) asparagine glycosylation occurs at Asn-61. The tract at residues 178-201 is disordered; that stretch reads GGSQHTGSAGKARRGTKSSGHDSS. Residues 407-437 are a coiled coil; sequence VKDLRSGIKELKNLLENFEKKNKKLASNQAK.

Interacts with BIP5.

It localises to the endoplasmic reticulum. The protein localises to the vacuole. Its function is as follows. May play a role in protein folding in the endoplasmic reticulum. The sequence is that of DnaJ protein ERDJ3A from Oryza sativa subsp. japonica (Rice).